Here is a 346-residue protein sequence, read N- to C-terminus: Methylthioribose-1-phosphate isomerase (346 aa).

Substrate-binding positions include Arg54–Ala56, Arg91, and Gln192. Asp233 acts as the Proton donor in catalysis. Asn243–Lys244 provides a ligand contact to substrate.

The protein belongs to the eIF-2B alpha/beta/delta subunits family. MtnA subfamily.

The enzyme catalyses 5-(methylsulfanyl)-alpha-D-ribose 1-phosphate = 5-(methylsulfanyl)-D-ribulose 1-phosphate. It participates in amino-acid biosynthesis; L-methionine biosynthesis via salvage pathway; L-methionine from S-methyl-5-thio-alpha-D-ribose 1-phosphate: step 1/6. In terms of biological role, catalyzes the interconversion of methylthioribose-1-phosphate (MTR-1-P) into methylthioribulose-1-phosphate (MTRu-1-P). This chain is Methylthioribose-1-phosphate isomerase, found in Yersinia enterocolitica serotype O:8 / biotype 1B (strain NCTC 13174 / 8081).